The following is a 429-amino-acid chain: Serine hydroxymethyltransferase 1 (429 aa).

(6S)-5,6,7,8-tetrahydrofolate is bound by residues Leu125 and 129-131 (GHL). Lys234 bears the N6-(pyridoxal phosphate)lysine mark.

It belongs to the SHMT family. Homodimer. It depends on pyridoxal 5'-phosphate as a cofactor.

The protein resides in the cytoplasm. The catalysed reaction is (6R)-5,10-methylene-5,6,7,8-tetrahydrofolate + glycine + H2O = (6S)-5,6,7,8-tetrahydrofolate + L-serine. The protein operates within one-carbon metabolism; tetrahydrofolate interconversion. It functions in the pathway amino-acid biosynthesis; glycine biosynthesis; glycine from L-serine: step 1/1. Functionally, catalyzes the reversible interconversion of serine and glycine with tetrahydrofolate (THF) serving as the one-carbon carrier. This reaction serves as the major source of one-carbon groups required for the biosynthesis of purines, thymidylate, methionine, and other important biomolecules. Also exhibits THF-independent aldolase activity toward beta-hydroxyamino acids, producing glycine and aldehydes, via a retro-aldol mechanism. This chain is Serine hydroxymethyltransferase 1, found in Agrobacterium fabrum (strain C58 / ATCC 33970) (Agrobacterium tumefaciens (strain C58)).